A 164-amino-acid polypeptide reads, in one-letter code: Putative F-box protein At1g59675 (164 aa).

Residues 9–56 (SQSDHVPLDLTIEILSRLPAKSVGRFRSVSKLWSANTTSQNFINSFAT) form the F-box domain.

The chain is Putative F-box protein At1g59675 from Arabidopsis thaliana (Mouse-ear cress).